The sequence spans 118 residues: MPRVKGGTVTRARRKKTIKLAKGYFGSKHTLYKVAKQQVMKSGQYAYRDRRQKKREFRKLWIARINAAARQHDISYSRLMNGLKVAGIDVNRKMLSEIAISDEKAFAELVNQAKAALK.

It belongs to the bacterial ribosomal protein bL20 family.

Its function is as follows. Binds directly to 23S ribosomal RNA and is necessary for the in vitro assembly process of the 50S ribosomal subunit. It is not involved in the protein synthesizing functions of that subunit. The chain is Large ribosomal subunit protein bL20 from Macrococcus caseolyticus (strain JCSC5402) (Macrococcoides caseolyticum).